We begin with the raw amino-acid sequence, 95 residues long: MYKTLLAQVFFHSIAKKKLYFFWLPRLFSLLLVPGFLFDIEILFLFHPIILLHASLGLSVIIEDYIHIETIKFQYLSLIKLLLVLLINLNILYLL.

Topologically, residues 1 to 19 are mitochondrial matrix; sequence MYKTLLAQVFFHSIAKKKL. The chain crosses the membrane as a helical span at residues 20-40; the sequence is YFFWLPRLFSLLLVPGFLFDI. A topological domain (mitochondrial intermembrane) is located at residue Glu41. The chain crosses the membrane as a helical span at residues 42–62; sequence ILFLFHPIILLHASLGLSVII. His53 contributes to the heme binding site. At 63–74 the chain is on the mitochondrial matrix side; sequence EDYIHIETIKFQ. Position 65 (Tyr65) interacts with a ubiquinone. Residues 75–95 traverse the membrane as a helical segment; it reads YLSLIKLLLVLLINLNILYLL.

Part of an enzyme complex containing four subunits: a flavoprotein, an iron-sulfur protein, plus two membrane-anchoring proteins. Heme serves as cofactor.

It localises to the mitochondrion inner membrane. The protein operates within carbohydrate metabolism; tricarboxylic acid cycle. Membrane-anchoring subunit of succinate dehydrogenase (SDH). This is Succinate dehydrogenase membrane anchor subunit (SDH4) from Porphyra purpurea (Red seaweed).